A 341-amino-acid chain; its full sequence is Nucleoid-associated protein Sden_2335 (341 aa).

Belongs to the YejK family.

The protein localises to the cytoplasm. It localises to the nucleoid. This Shewanella denitrificans (strain OS217 / ATCC BAA-1090 / DSM 15013) protein is Nucleoid-associated protein Sden_2335.